Consider the following 282-residue polypeptide: Probable aquaporin PIP2-6 (282 aa).

2 helical membrane-spanning segments follow: residues 39–59 and 76–96; these read ALIA…ATVI and LGIA…TAGI. The NPA 1 signature appears at 102 to 104; that stretch reads NPA. Transmembrane regions (helical) follow at residues 121-141, 163-183, and 197-217; these read VMYI…VKGI, GTAL…VFSA, and VLAP…TIPI. Residues 223–225 carry the NPA 2 motif; it reads NPA. A helical transmembrane segment spans residues 245–265; that stretch reads IFWAGPFIGALAAAAYHQYIL.

Belongs to the MIP/aquaporin (TC 1.A.8) family. PIP (TC 1.A.8.11) subfamily. In terms of tissue distribution, expressed in roots and leaves.

It is found in the cell membrane. Its function is as follows. Aquaporins facilitate the transport of water and small neutral solutes across cell membranes. This is Probable aquaporin PIP2-6 (PIP2-6) from Oryza sativa subsp. japonica (Rice).